We begin with the raw amino-acid sequence, 117 residues long: Small ribosomal subunit protein uS17 (117 aa).

A disordered region spans residues 97 to 117; that stretch reads AEGLAAAHAGEPETESAATDA.

Belongs to the universal ribosomal protein uS17 family. As to quaternary structure, part of the 30S ribosomal subunit.

One of the primary rRNA binding proteins, it binds specifically to the 5'-end of 16S ribosomal RNA. The chain is Small ribosomal subunit protein uS17 from Rhodopirellula baltica (strain DSM 10527 / NCIMB 13988 / SH1).